The primary structure comprises 193 residues: V-type ATP synthase subunit E (193 aa).

This sequence belongs to the V-ATPase E subunit family.

In terms of biological role, produces ATP from ADP in the presence of a proton gradient across the membrane. This is V-type ATP synthase subunit E from Anaeromyxobacter sp. (strain Fw109-5).